Reading from the N-terminus, the 353-residue chain is Photosystem II protein D1 (353 aa).

Residue threonine 2 is modified to N-acetylthreonine. Threonine 2 is subject to Phosphothreonine. 3 consecutive transmembrane segments (helical) span residues 29–46 (YIGWFGVLMIPTLLTATS), 118–133 (HFLLGVACYMGREWEL), and 142–156 (WIAVAYSAPVAAATA). Histidine 118 is a binding site for chlorophyll a. Pheophytin a is bound at residue tyrosine 126. Aspartate 170 and glutamate 189 together coordinate [CaMn4O5] cluster. The chain crosses the membrane as a helical span at residues 197-218 (FHMLGVAGVFGGSLFSAMHGSL). Histidine 198 is a chlorophyll a binding site. A quinone is bound by residues histidine 215 and 264-265 (SF). Histidine 215 is a binding site for Fe cation. Histidine 272 is a binding site for Fe cation. The helical transmembrane segment at 274-288 (FLAAWPVVGIWFTAL) threads the bilayer. [CaMn4O5] cluster contacts are provided by histidine 332, glutamate 333, aspartate 342, and alanine 344. Residues 345 to 353 (AIEAPSTNG) constitute a propeptide that is removed on maturation.

It belongs to the reaction center PufL/M/PsbA/D family. As to quaternary structure, PSII is composed of 1 copy each of membrane proteins PsbA, PsbB, PsbC, PsbD, PsbE, PsbF, PsbH, PsbI, PsbJ, PsbK, PsbL, PsbM, PsbT, PsbX, PsbY, PsbZ, Psb30/Ycf12, at least 3 peripheral proteins of the oxygen-evolving complex and a large number of cofactors. It forms dimeric complexes. Requires The D1/D2 heterodimer binds P680, chlorophylls that are the primary electron donor of PSII, and subsequent electron acceptors. It shares a non-heme iron and each subunit binds pheophytin, quinone, additional chlorophylls, carotenoids and lipids. D1 provides most of the ligands for the Mn4-Ca-O5 cluster of the oxygen-evolving complex (OEC). There is also a Cl(-1) ion associated with D1 and D2, which is required for oxygen evolution. The PSII complex binds additional chlorophylls, carotenoids and specific lipids. as cofactor. Tyr-161 forms a radical intermediate that is referred to as redox-active TyrZ, YZ or Y-Z. Post-translationally, C-terminally processed by CTPA; processing is essential to allow assembly of the oxygen-evolving complex and thus photosynthetic growth.

It localises to the plastid. It is found in the chloroplast thylakoid membrane. It catalyses the reaction 2 a plastoquinone + 4 hnu + 2 H2O = 2 a plastoquinol + O2. In terms of biological role, photosystem II (PSII) is a light-driven water:plastoquinone oxidoreductase that uses light energy to abstract electrons from H(2)O, generating O(2) and a proton gradient subsequently used for ATP formation. It consists of a core antenna complex that captures photons, and an electron transfer chain that converts photonic excitation into a charge separation. The D1/D2 (PsbA/PsbD) reaction center heterodimer binds P680, the primary electron donor of PSII as well as several subsequent electron acceptors. The protein is Photosystem II protein D1 of Petunia hybrida (Petunia).